We begin with the raw amino-acid sequence, 917 residues long: MLKKLGIKGRVLLLTLLPTSLMALVLGGYFTWMQLSDLQTQLLQRGEMIAEQLASLVAPAMGNHNTQMLERIATQALEQQDVRAVSLLAPDRSLLAHAGPSMLNPPPAGNSSHMMQRSGSDATRYQLPVFGRHRNLAGDLIPDESDRLLGWVELELSHSGMLLRGYRSLFASLLLIAAGLAGTALLAVRMGRTINNPLTQIKQAVAQLKDGNLETRLPPLGSQELDELASGINRMASTLQNAQEELQHSIDQATEDVRQNLETIEIQNIELDLARKEALEASRIKSEFLANMSHEIRTPLNGILGFTHLLQKSELTPRQLDYLGTIEKSADSLLGIINEILDFSKIEAGKLVLDSIPFNLRDLLQDTLTILAPAAHAKQLELVSLVYRDTPLSLVGDPLRLKQILTNLVSNAIKFTREGTIVARAMLEEEHEDSVQLRISIQDTGIGLSNQDVRALFQAFSQADNSLSRQPGGTGLGLVISKRLIEQMGGEIGVDSTPGEGSEFWISLNLPKTRDDAEDLPGPPLLGRRVAVLENHELARQALQHQLEDCGLEVTPFNTLEALTNGITGVHQSEQAIDLAVLGITTNDMSPERLSQHIWDLEHLGCKVLVLCPTTEQTLFHLSVPNPHSQLQAKPACTRKLRRALSDLVTPRRARSEPEETLSSRAPRVLCVDDNPANLLLIQTLLEDMGAKVLAVDNGYAALNAIQTEPFDLVMMDVQMPGMDGRQSTEAIRQWESERHGTPLPIVALTAHAMANEKRALLQSGMDDYLTKPISERQLAQVVLKWTGLALRNQGPERASERPELGLELQVLDQDEGLRLAAGKADLAADMLAMLLASLDADREAIKAARAANDQNALIERVHRLHGATRYCGVPQLRAACQRSETLLKQEDAKAFAALDELDHAIGRLAAEARTNA.

2 helical membrane passes run 11–31 (VLLL…GYFT) and 168–188 (SLFA…LLAV). One can recognise an HAMP domain in the interval 192–244 (RTINNPLTQIKQAVAQLKDGNLETRLPPLGSQELDELASGINRMASTLQNAQE). Residues 291-512 (NMSHEIRTPL…EFWISLNLPK (222 aa)) enclose the Histidine kinase domain. Residue histidine 294 is modified to Phosphohistidine; by autocatalysis. One can recognise a Response regulatory domain in the interval 668 to 787 (RVLCVDDNPA…QLAQVVLKWT (120 aa)). Aspartate 717 carries the 4-aspartylphosphate modification. The 94-residue stretch at 824 to 917 (KADLAADMLA…RLAAEARTNA (94 aa)) folds into the HPt domain. Histidine 863 carries the phosphohistidine modification.

Post-translationally, activation requires a sequential transfer of a phosphate group from a His in the primary transmitter domain, to an Asp in the receiver domain and to a His in the secondary transmitter domain.

The protein localises to the cell inner membrane. It carries out the reaction ATP + protein L-histidine = ADP + protein N-phospho-L-histidine.. In terms of biological role, member of the two-component regulatory system GacA/GacS which controls the expression of secondary metabolites and extracellular products. Activates GacA by phosphorylation. GacA acts (probably primarily) by activating expression of CsrA1 and CsrA2 antagonist small RNAs (sRNA) RsmX, RsmY and RsmZ which bind to and prevent translation repression by CsrA1 and CsrA2. Involved in the regulation of secondary metabolism and in the synthesis of the antifungal factors cyanide, 2,4-diacetylphloroglucinol and pyoluteorin. Exercises positive post-transcriptional control over the hcnABC and aprA genes; acts upstream of CsrA2 (rsmA). Controls expression of CsrA1 and CsrA2 antagonist sRNAs RsmX, RsmY and probably RsmZ. Probably controls expression of csrA1 (rsmE) and csrA2. The polypeptide is Sensor histidine kinase GacS (gacS) (Pseudomonas protegens (strain DSM 19095 / LMG 27888 / CFBP 6595 / CHA0)).